We begin with the raw amino-acid sequence, 347 residues long: MSRSLNLAVIPGDGIGQEVVAEGLKVLSAVLPQDVKLETKEFDFGARRYHATGETLTDADLDALKAHDAILLGAIGDPSVPSGVLERGFLLKLRFAFDHHVNLRPSKLLPGVATPLAGQPEIDFVVVREGTEGPYTGNGGTIRKGTEHEVATEVSVNTAYGVERVVRDAFARAQARPRKKLTLVHKNNVLTFAGHLWTNIFNKVAAEYPEVTTDYLHVDAATIFLVTDPARFDVIVTDNLFGDIITDLAAAVSGGIGVAASGNINPSGDFPSMFEPVHGSAPDIAGQGKADPTATVLSVALLLRHLGYEDEAARIEDAVSADLGERGDLPARSTSEIGDTLAARVAG.

Substrate contacts are provided by R94, R104, R128, and D219. Positions 219, 243, and 247 each coordinate Mg(2+). 279–291 contacts NAD(+); that stretch reads GSAPDIAGQGKAD.

It belongs to the isocitrate and isopropylmalate dehydrogenases family. LeuB type 2 subfamily. As to quaternary structure, homodimer. Mg(2+) is required as a cofactor. Requires Mn(2+) as cofactor.

Its subcellular location is the cytoplasm. It carries out the reaction (2R,3S)-3-isopropylmalate + NAD(+) = 4-methyl-2-oxopentanoate + CO2 + NADH. It functions in the pathway amino-acid biosynthesis; L-leucine biosynthesis; L-leucine from 3-methyl-2-oxobutanoate: step 3/4. In terms of biological role, catalyzes the oxidation of 3-carboxy-2-hydroxy-4-methylpentanoate (3-isopropylmalate) to 3-carboxy-4-methyl-2-oxopentanoate. The product decarboxylates to 4-methyl-2 oxopentanoate. The chain is 3-isopropylmalate dehydrogenase from Streptomyces coelicolor (strain ATCC BAA-471 / A3(2) / M145).